The primary structure comprises 505 residues: Maturase K (505 aa).

It belongs to the intron maturase 2 family. MatK subfamily.

It is found in the plastid. The protein resides in the chloroplast. Usually encoded in the trnK tRNA gene intron. Probably assists in splicing its own and other chloroplast group II introns. The sequence is that of Maturase K from Morus indica (Mulberry).